Consider the following 255-residue polypeptide: Hydroxyacylglutathione hydrolase (255 aa).

7 residues coordinate Zn(2+): histidine 53, histidine 55, aspartate 57, histidine 58, histidine 110, aspartate 127, and histidine 165.

The protein belongs to the metallo-beta-lactamase superfamily. Glyoxalase II family. Monomer. Zn(2+) is required as a cofactor.

The enzyme catalyses an S-(2-hydroxyacyl)glutathione + H2O = a 2-hydroxy carboxylate + glutathione + H(+). Its pathway is secondary metabolite metabolism; methylglyoxal degradation; (R)-lactate from methylglyoxal: step 2/2. Functionally, thiolesterase that catalyzes the hydrolysis of S-D-lactoyl-glutathione to form glutathione and D-lactic acid. This is Hydroxyacylglutathione hydrolase from Xanthomonas euvesicatoria pv. vesicatoria (strain 85-10) (Xanthomonas campestris pv. vesicatoria).